A 111-amino-acid chain; its full sequence is T cell receptor beta variable 20-1 (111 aa).

An N-terminal signal peptide occupies residues 1–15 (MLLLLLLLGPGSGLG). The Ig-like domain occupies 16–111 (AVVSQHPSRV…DSSFYICSAR (96 aa)). Residues Cys37 and Cys108 are joined by a disulfide bond.

Alpha-beta TR is a heterodimer composed of an alpha and beta chain; disulfide-linked. The alpha-beta TR is associated with the transmembrane signaling CD3 coreceptor proteins to form the TR-CD3 (TcR or TCR). The assembly of alpha-beta TR heterodimers with CD3 occurs in the endoplasmic reticulum where a single alpha-beta TR heterodimer associates with one CD3D-CD3E heterodimer, one CD3G-CD3E heterodimer and one CD247 homodimer forming a stable octameric structure. CD3D-CD3E and CD3G-CD3E heterodimers preferentially associate with TR alpha and TR beta chains, respectively. The association of the CD247 homodimer is the last step of TcR assembly in the endoplasmic reticulum and is required for transport to the cell surface.

The protein localises to the cell membrane. In terms of biological role, v region of the variable domain of T cell receptor (TR) beta chain that participates in the antigen recognition. Alpha-beta T cell receptors are antigen specific receptors which are essential to the immune response and are present on the cell surface of T lymphocytes. Recognize peptide-major histocompatibility (MH) (pMH) complexes that are displayed by antigen presenting cells (APC), a prerequisite for efficient T cell adaptive immunity against pathogens. Binding of alpha-beta TR to pMH complex initiates TR-CD3 clustering on the cell surface and intracellular activation of LCK that phosphorylates the ITAM motifs of CD3G, CD3D, CD3E and CD247 enabling the recruitment of ZAP70. In turn ZAP70 phosphorylates LAT, which recruits numerous signaling molecules to form the LAT signalosome. The LAT signalosome propagates signal branching to three major signaling pathways, the calcium, the mitogen-activated protein kinase (MAPK) kinase and the nuclear factor NF-kappa-B (NF-kB) pathways, leading to the mobilization of transcription factors that are critical for gene expression and essential for T cell growth and differentiation. The T cell repertoire is generated in the thymus, by V-(D)-J rearrangement. This repertoire is then shaped by intrathymic selection events to generate a peripheral T cell pool of self-MH restricted, non-autoaggressive T cells. Post-thymic interaction of alpha-beta TR with the pMH complexes shapes TR structural and functional avidity. The sequence is that of T cell receptor beta variable 20-1 from Homo sapiens (Human).